A 120-amino-acid polypeptide reads, in one-letter code: Aspartate 1-decarboxylase (120 aa).

The active-site Schiff-base intermediate with substrate; via pyruvic acid is the Ser25. Position 25 is a pyruvic acid (Ser) (Ser25). Thr57 is a substrate binding site. Tyr58 functions as the Proton donor in the catalytic mechanism. 73-75 (GAA) serves as a coordination point for substrate.

The protein belongs to the PanD family. Heterooctamer of four alpha and four beta subunits. Pyruvate serves as cofactor. Post-translationally, is synthesized initially as an inactive proenzyme, which is activated by self-cleavage at a specific serine bond to produce a beta-subunit with a hydroxyl group at its C-terminus and an alpha-subunit with a pyruvoyl group at its N-terminus.

It localises to the cytoplasm. It catalyses the reaction L-aspartate + H(+) = beta-alanine + CO2. Its pathway is cofactor biosynthesis; (R)-pantothenate biosynthesis; beta-alanine from L-aspartate: step 1/1. Functionally, catalyzes the pyruvoyl-dependent decarboxylation of aspartate to produce beta-alanine. The sequence is that of Aspartate 1-decarboxylase from Coprothermobacter proteolyticus (strain ATCC 35245 / DSM 5265 / OCM 4 / BT).